A 1001-amino-acid chain; its full sequence is MTELDNFSMLEASKQVPDRKESSQILADHMSGRLLQKRLELVEDLWETVVRSECPLEQVERLLRLKQLSNSSGIVGEEQTNQINEIVELIKEMDLAEAISAARAFSLYFQLVNILEQRIEEDSYLESISRGQEEKINTSIDPFAPPLASQTAPATFSELFDRLRRLNVPPGQLEELLREMDIRLVFTAHPTEIVRHTVRHKQRRVASLLQQLQSDEVFSLSERDNLRLQLEEEIRLWWRTDELHQFKPTVLDEVDYALHYFQQVLFDAMPQLRRRICSALSQSYPDIDVPQEAFCTFGSWVGSDRDGNPSVTPEITWRTACYQRKLMLDRYMHSVQELRNQLSISMQWSQVSTQLLESLEMDRVRFPHIYEERAARYRLEPYRLKLSYTLERLKFTQQRNQELSEAGWATTIERTNVSNNPDEDLHYCSIDEFRRDLELIRNSLVATNLSCEQLDTLLTQVHIFAFSLASLDIRQESTRHSEAIDELTRYLNLPKSYIEMTEDEKVIWLMDELQTLRPLIPSAVQWSKSTEETFAVFRMLDRLQKEFGSRICRSYVISMSHTVSDLLEVLLLAKEYGLVDISSESSDLLVIPLFETVEDLQHAPSVMEELFQSEIYLKLLPRVGEKSQPLQELMLGYSDSNKDSGFLSSNWEIHQAQIALQNLASSHGVALRLFHGRGGSVGRGGGPAYQAILAQPSGTLKGRIKITEQGEVLASKYSLPELALYNLETVTTAVLQNSLVTNQWDATPSWNELMTRLAVRSRQHYRALVHDNPDLVAFFQEVTPIEEISKLQISSRPARRKTGAKDLSSLRAIPWVFGWTQSRFLLPSWFGVGTALEEELKSDPDHIELLRMLNQRWPFFRMLISKVEMTLSKVDLEVAYHYMTSLGSHENREAFNCIFEIISNEYKLTRRLVLEITGKPKLLSADPALQLSVDLRNRTIVPLGFLQVALLCRLRDQNRQPPMSETLLTEGDIGRTYSRSELLRGALLTINGIAAGMRNTG.

Residues His189 and Lys642 contribute to the active site.

This sequence belongs to the PEPCase type 1 family. Mg(2+) is required as a cofactor.

The enzyme catalyses oxaloacetate + phosphate = phosphoenolpyruvate + hydrogencarbonate. Forms oxaloacetate, a four-carbon dicarboxylic acid source for the tricarboxylic acid cycle. This Prochlorococcus marinus (strain SARG / CCMP1375 / SS120) protein is Phosphoenolpyruvate carboxylase.